The following is a 298-amino-acid chain: Specificity protein transcription factor 1 (298 aa).

Over residues 206 to 218 the composition is skewed to low complexity; the sequence is VSSGSESVSARGT. Positions 206–233 are disordered; the sequence is VSSGSESVSARGTSGSGGTGKYPSSRTA. The C2H2-type zinc-finger motif lies at 260 to 284; the sequence is HNCHIAGCGKVYNKSSHLKAHLRWH.

This sequence belongs to the Sp1 C2H2-type zinc-finger protein family. In terms of tissue distribution, expressed in ASJ sensory neurons, pharyngeal cells, rectal cells, intestine, seam cells, and vulval cells.

Functionally, probable transcription factor which modulates gene expression, thereby acting as an ASJ sensory neuron terminal selector gene. This Caenorhabditis elegans protein is Specificity protein transcription factor 1.